Consider the following 199-residue polypeptide: Probable GTP-binding protein EngB (199 aa).

The EngB-type G domain maps to 28–199 (DLPEIALAGR…DSWDAILEQV (172 aa)). Residues 36 to 43 (GRSNVGKS), 63 to 67 (GKTQL), 81 to 84 (DVPG), 148 to 151 (TKAD), and 180 to 182 (FSS) each bind GTP. S43 and T65 together coordinate Mg(2+).

This sequence belongs to the TRAFAC class TrmE-Era-EngA-EngB-Septin-like GTPase superfamily. EngB GTPase family. Requires Mg(2+) as cofactor.

Functionally, necessary for normal cell division and for the maintenance of normal septation. This is Probable GTP-binding protein EngB from Streptococcus pyogenes serotype M18 (strain MGAS8232).